Consider the following 118-residue polypeptide: Large ribosomal subunit protein bL19 (118 aa).

The protein belongs to the bacterial ribosomal protein bL19 family.

In terms of biological role, this protein is located at the 30S-50S ribosomal subunit interface and may play a role in the structure and function of the aminoacyl-tRNA binding site. This chain is Large ribosomal subunit protein bL19, found in Ligilactobacillus salivarius (strain UCC118) (Lactobacillus salivarius).